The following is a 330-amino-acid chain: Aspartate--ammonia ligase (330 aa).

Belongs to the class-II aminoacyl-tRNA synthetase family. AsnA subfamily.

It localises to the cytoplasm. The enzyme catalyses L-aspartate + NH4(+) + ATP = L-asparagine + AMP + diphosphate + H(+). Its pathway is amino-acid biosynthesis; L-asparagine biosynthesis; L-asparagine from L-aspartate (ammonia route): step 1/1. The sequence is that of Aspartate--ammonia ligase from Salmonella newport (strain SL254).